A 116-amino-acid chain; its full sequence is Iron-sulfur cluster insertion protein ErpA (116 aa).

Cys-44, Cys-108, and Cys-110 together coordinate iron-sulfur cluster.

The protein belongs to the HesB/IscA family. In terms of assembly, homodimer. Iron-sulfur cluster is required as a cofactor.

Its function is as follows. Required for insertion of 4Fe-4S clusters for at least IspG. In Ectopseudomonas mendocina (strain ymp) (Pseudomonas mendocina), this protein is Iron-sulfur cluster insertion protein ErpA.